Here is a 347-residue protein sequence, read N- to C-terminus: NADH-ubiquinone oxidoreductase chain 2 (347 aa).

11 helical membrane-spanning segments follow: residues 3–23 (PPIL…VLTS), 25–45 (HWML…PILM), 59–79 (YFLM…INLL), 96–116 (TLMT…FWVP), 122–142 (ISLS…LSVL), 153–173 (LLLL…LNQT), 178–198 (ILAY…IYNP), 200–220 (MMLL…MLFM), 237–257 (MPLI…LPPL), 274–294 (EMII…YFYM), and 325–345 (FLPP…IISI).

Belongs to the complex I subunit 2 family. As to quaternary structure, core subunit of respiratory chain NADH dehydrogenase (Complex I) which is composed of 45 different subunits. Interacts with TMEM242.

The protein resides in the mitochondrion inner membrane. It carries out the reaction a ubiquinone + NADH + 5 H(+)(in) = a ubiquinol + NAD(+) + 4 H(+)(out). Its function is as follows. Core subunit of the mitochondrial membrane respiratory chain NADH dehydrogenase (Complex I) which catalyzes electron transfer from NADH through the respiratory chain, using ubiquinone as an electron acceptor. Essential for the catalytic activity and assembly of complex I. In Paradoxurus hermaphroditus (Asian palm civet), this protein is NADH-ubiquinone oxidoreductase chain 2.